The following is a 450-amino-acid chain: UDP-N-acetylmuramoylalanine--D-glutamate ligase (450 aa).

119–125 is a binding site for ATP; that stretch reads GSNGKTT.

The protein belongs to the MurCDEF family.

The protein localises to the cytoplasm. The catalysed reaction is UDP-N-acetyl-alpha-D-muramoyl-L-alanine + D-glutamate + ATP = UDP-N-acetyl-alpha-D-muramoyl-L-alanyl-D-glutamate + ADP + phosphate + H(+). It participates in cell wall biogenesis; peptidoglycan biosynthesis. Cell wall formation. Catalyzes the addition of glutamate to the nucleotide precursor UDP-N-acetylmuramoyl-L-alanine (UMA). This is UDP-N-acetylmuramoylalanine--D-glutamate ligase from Bacillus cereus (strain ATCC 14579 / DSM 31 / CCUG 7414 / JCM 2152 / NBRC 15305 / NCIMB 9373 / NCTC 2599 / NRRL B-3711).